The following is a 132-amino-acid chain: Small ribosomal subunit protein uS8 (132 aa).

The protein belongs to the universal ribosomal protein uS8 family. In terms of assembly, part of the 30S ribosomal subunit. Contacts proteins S5 and S12.

Its function is as follows. One of the primary rRNA binding proteins, it binds directly to 16S rRNA central domain where it helps coordinate assembly of the platform of the 30S subunit. The sequence is that of Small ribosomal subunit protein uS8 from Kineococcus radiotolerans (strain ATCC BAA-149 / DSM 14245 / SRS30216).